Reading from the N-terminus, the 119-residue chain is Large ribosomal subunit protein bL20 (119 aa).

This sequence belongs to the bacterial ribosomal protein bL20 family.

Its function is as follows. Binds directly to 23S ribosomal RNA and is necessary for the in vitro assembly process of the 50S ribosomal subunit. It is not involved in the protein synthesizing functions of that subunit. The protein is Large ribosomal subunit protein bL20 of Lactococcus lactis subsp. cremoris (strain MG1363).